Reading from the N-terminus, the 216-residue chain is Probable transaldolase (216 aa).

Residue lysine 83 is the Schiff-base intermediate with substrate of the active site.

This sequence belongs to the transaldolase family. Type 3B subfamily.

Its subcellular location is the cytoplasm. The catalysed reaction is D-sedoheptulose 7-phosphate + D-glyceraldehyde 3-phosphate = D-erythrose 4-phosphate + beta-D-fructose 6-phosphate. It participates in carbohydrate degradation; pentose phosphate pathway; D-glyceraldehyde 3-phosphate and beta-D-fructose 6-phosphate from D-ribose 5-phosphate and D-xylulose 5-phosphate (non-oxidative stage): step 2/3. Functionally, transaldolase is important for the balance of metabolites in the pentose-phosphate pathway. This chain is Probable transaldolase, found in Symbiobacterium thermophilum (strain DSM 24528 / JCM 14929 / IAM 14863 / T).